The following is a 354-amino-acid chain: Variable large protein 15/16 (354 aa).

The N-terminal stretch at Met1–Ser18 is a signal peptide. Cys19 carries the N-palmitoyl cysteine lipid modification. Cys19 carries S-diacylglycerol cysteine lipidation. The disordered stretch occupies residues Glu333–Asn354. Residues Glu338–Asn354 are compositionally biased toward polar residues.

It belongs to the variable large protein (Vlp) family. Delta subfamily.

The protein localises to the cell outer membrane. Its function is as follows. The Vlp and Vsp proteins are antigenically distinct proteins, only one vlp or vsp gene is transcriptionally active at any one time. Switching between these genes is a mechanism of host immune response evasion. In Borrelia hermsii, this protein is Variable large protein 15/16.